The sequence spans 538 residues: Bifunctional purine biosynthesis protein PurH (538 aa).

Positions 8 to 158 (IPAPDKVEIK…KNHAYVTILT (151 aa)) constitute an MGS-like domain.

This sequence belongs to the PurH family.

It carries out the reaction (6R)-10-formyltetrahydrofolate + 5-amino-1-(5-phospho-beta-D-ribosyl)imidazole-4-carboxamide = 5-formamido-1-(5-phospho-D-ribosyl)imidazole-4-carboxamide + (6S)-5,6,7,8-tetrahydrofolate. It catalyses the reaction IMP + H2O = 5-formamido-1-(5-phospho-D-ribosyl)imidazole-4-carboxamide. Its pathway is purine metabolism; IMP biosynthesis via de novo pathway; 5-formamido-1-(5-phospho-D-ribosyl)imidazole-4-carboxamide from 5-amino-1-(5-phospho-D-ribosyl)imidazole-4-carboxamide (10-formyl THF route): step 1/1. It functions in the pathway purine metabolism; IMP biosynthesis via de novo pathway; IMP from 5-formamido-1-(5-phospho-D-ribosyl)imidazole-4-carboxamide: step 1/1. The chain is Bifunctional purine biosynthesis protein PurH from Rhizobium leguminosarum bv. trifolii (strain WSM2304).